A 101-amino-acid polypeptide reads, in one-letter code: Urease subunit beta (101 aa).

It belongs to the urease beta subunit family. Heterotrimer of UreA (gamma), UreB (beta) and UreC (alpha) subunits. Three heterotrimers associate to form the active enzyme.

It localises to the cytoplasm. The enzyme catalyses urea + 2 H2O + H(+) = hydrogencarbonate + 2 NH4(+). The protein operates within nitrogen metabolism; urea degradation; CO(2) and NH(3) from urea (urease route): step 1/1. This chain is Urease subunit beta, found in Allorhizobium ampelinum (strain ATCC BAA-846 / DSM 112012 / S4) (Agrobacterium vitis (strain S4)).